A 351-amino-acid polypeptide reads, in one-letter code: Ribonucleoside-diphosphate reductase subunit beta (351 aa).

Fe cation-binding residues include Asp-94, Glu-124, and His-127. Tyr-131 is an active-site residue. Residues Glu-191, Glu-225, and His-228 each coordinate Fe cation.

Belongs to the ribonucleoside diphosphate reductase small chain family. As to quaternary structure, tetramer of two alpha and two beta subunits. The cofactor is Fe cation.

The catalysed reaction is a 2'-deoxyribonucleoside 5'-diphosphate + [thioredoxin]-disulfide + H2O = a ribonucleoside 5'-diphosphate + [thioredoxin]-dithiol. In terms of biological role, provides the precursors necessary for DNA synthesis. Catalyzes the biosynthesis of deoxyribonucleotides from the corresponding ribonucleotides. The protein is Ribonucleoside-diphosphate reductase subunit beta (nrdB) of Treponema pallidum (strain Nichols).